The following is a 267-amino-acid chain: tRNA pseudouridine synthase A (267 aa).

Residue D51 is the Nucleophile of the active site. Residue Y109 coordinates substrate.

The protein belongs to the tRNA pseudouridine synthase TruA family. In terms of assembly, homodimer.

It catalyses the reaction uridine(38/39/40) in tRNA = pseudouridine(38/39/40) in tRNA. Formation of pseudouridine at positions 38, 39 and 40 in the anticodon stem and loop of transfer RNAs. The chain is tRNA pseudouridine synthase A from Staphylococcus aureus (strain MSSA476).